Reading from the N-terminus, the 395-residue chain is S-adenosylmethionine synthase (395 aa).

Residue H16 participates in ATP binding. D18 is a binding site for Mg(2+). Residue E44 coordinates K(+). Residues E57 and Q100 each coordinate L-methionine. Positions Q100–R110 are flexible loop. ATP-binding positions include D167–K169, R233–F234, D242, R248–K249, A265, and K269. D242 provides a ligand contact to L-methionine. K273 is an L-methionine binding site.

The protein belongs to the AdoMet synthase family. Homotetramer; dimer of dimers. Mg(2+) serves as cofactor. It depends on K(+) as a cofactor.

The protein localises to the cytoplasm. It carries out the reaction L-methionine + ATP + H2O = S-adenosyl-L-methionine + phosphate + diphosphate. Its pathway is amino-acid biosynthesis; S-adenosyl-L-methionine biosynthesis; S-adenosyl-L-methionine from L-methionine: step 1/1. Catalyzes the formation of S-adenosylmethionine (AdoMet) from methionine and ATP. The overall synthetic reaction is composed of two sequential steps, AdoMet formation and the subsequent tripolyphosphate hydrolysis which occurs prior to release of AdoMet from the enzyme. This chain is S-adenosylmethionine synthase, found in Burkholderia thailandensis (strain ATCC 700388 / DSM 13276 / CCUG 48851 / CIP 106301 / E264).